A 290-amino-acid chain; its full sequence is Dihydroorotate dehydrogenase B (NAD(+)), catalytic subunit (290 aa).

FMN contacts are provided by residues serine 17 and 42–43 (KT). Substrate is bound by residues lysine 42, 67-71 (NAIGL), and asparagine 117. Asparagine 117 is an FMN binding site. The Nucleophile role is filled by serine 120. Lysine 152 and isoleucine 177 together coordinate FMN. 178–179 (NT) serves as a coordination point for substrate. FMN is bound by residues glycine 203, 229 to 230 (GG), and 251 to 252 (GT).

It belongs to the dihydroorotate dehydrogenase family. Type 1 subfamily. As to quaternary structure, heterotetramer of 2 PyrK and 2 PyrD type B subunits. FMN serves as cofactor.

Its subcellular location is the cytoplasm. The catalysed reaction is (S)-dihydroorotate + NAD(+) = orotate + NADH + H(+). It functions in the pathway pyrimidine metabolism; UMP biosynthesis via de novo pathway; orotate from (S)-dihydroorotate (NAD(+) route): step 1/1. In terms of biological role, catalyzes the conversion of dihydroorotate to orotate with NAD(+) as electron acceptor. The protein is Dihydroorotate dehydrogenase B (NAD(+)), catalytic subunit (pyrD) of Saccharolobus solfataricus (strain ATCC 35092 / DSM 1617 / JCM 11322 / P2) (Sulfolobus solfataricus).